Reading from the N-terminus, the 235-residue chain is tRNA (guanine-N(1)-)-methyltransferase (235 aa).

S-adenosyl-L-methionine-binding positions include Gly-112 and 132–137; that span reads LGDFVL.

The protein belongs to the RNA methyltransferase TrmD family. In terms of assembly, homodimer.

Its subcellular location is the cytoplasm. The enzyme catalyses guanosine(37) in tRNA + S-adenosyl-L-methionine = N(1)-methylguanosine(37) in tRNA + S-adenosyl-L-homocysteine + H(+). In terms of biological role, specifically methylates guanosine-37 in various tRNAs. The polypeptide is tRNA (guanine-N(1)-)-methyltransferase (Acaryochloris marina (strain MBIC 11017)).